A 437-amino-acid chain; its full sequence is tRNA-2-methylthio-N(6)-dimethylallyladenosine synthase (437 aa).

The 117-residue stretch at 1-117 (MKFYIKTFGC…LPNLLEEAKS (117 aa)) folds into the MTTase N-terminal domain. Residues cysteine 10, cysteine 46, cysteine 80, cysteine 156, cysteine 160, and cysteine 163 each contribute to the [4Fe-4S] cluster site. One can recognise a Radical SAM core domain in the interval 142–371 (RENKYTAFVT…INLQKDITFK (230 aa)). Positions 374–435 (LEYQDKIVEI…RFSLEGSIIG (62 aa)) constitute a TRAM domain.

Belongs to the methylthiotransferase family. MiaB subfamily. In terms of assembly, monomer. Requires [4Fe-4S] cluster as cofactor.

It is found in the cytoplasm. It carries out the reaction N(6)-dimethylallyladenosine(37) in tRNA + (sulfur carrier)-SH + AH2 + 2 S-adenosyl-L-methionine = 2-methylsulfanyl-N(6)-dimethylallyladenosine(37) in tRNA + (sulfur carrier)-H + 5'-deoxyadenosine + L-methionine + A + S-adenosyl-L-homocysteine + 2 H(+). Functionally, catalyzes the methylthiolation of N6-(dimethylallyl)adenosine (i(6)A), leading to the formation of 2-methylthio-N6-(dimethylallyl)adenosine (ms(2)i(6)A) at position 37 in tRNAs that read codons beginning with uridine. The protein is tRNA-2-methylthio-N(6)-dimethylallyladenosine synthase of Sulfurihydrogenibium sp. (strain YO3AOP1).